We begin with the raw amino-acid sequence, 517 residues long: Crotonobetaine/carnitine--CoA ligase (517 aa).

The protein belongs to the ATP-dependent AMP-binding enzyme family.

It carries out the reaction 4-(trimethylamino)butanoate + ATP + CoA = 4-(trimethylamino)butanoyl-CoA + AMP + diphosphate. The enzyme catalyses crotonobetaine + ATP + CoA = crotonobetainyl-CoA + AMP + diphosphate. The catalysed reaction is (R)-carnitine + ATP + CoA = (R)-carnitinyl-CoA + AMP + diphosphate. The protein operates within amine and polyamine metabolism; carnitine metabolism. Its function is as follows. Catalyzes the transfer of CoA to carnitine, generating the initial carnitinyl-CoA needed for the CaiB reaction cycle. Also has activity toward crotonobetaine and gamma-butyrobetaine. This chain is Crotonobetaine/carnitine--CoA ligase, found in Escherichia fergusonii (strain ATCC 35469 / DSM 13698 / CCUG 18766 / IAM 14443 / JCM 21226 / LMG 7866 / NBRC 102419 / NCTC 12128 / CDC 0568-73).